The following is a 492-amino-acid chain: N-succinylglutamate 5-semialdehyde dehydrogenase (492 aa).

Position 220 to 225 (220 to 225 (GRANTG)) interacts with NAD(+). Active-site residues include E243 and C277.

The protein belongs to the aldehyde dehydrogenase family. AstD subfamily.

It carries out the reaction N-succinyl-L-glutamate 5-semialdehyde + NAD(+) + H2O = N-succinyl-L-glutamate + NADH + 2 H(+). It participates in amino-acid degradation; L-arginine degradation via AST pathway; L-glutamate and succinate from L-arginine: step 4/5. In terms of biological role, catalyzes the NAD-dependent reduction of succinylglutamate semialdehyde into succinylglutamate. The sequence is that of N-succinylglutamate 5-semialdehyde dehydrogenase from Shigella boydii serotype 18 (strain CDC 3083-94 / BS512).